The following is a 318-amino-acid chain: Porphobilinogen deaminase (318 aa).

C241 carries the post-translational modification S-(dipyrrolylmethanemethyl)cysteine.

Belongs to the HMBS family. As to quaternary structure, monomer. Requires dipyrromethane as cofactor.

The enzyme catalyses 4 porphobilinogen + H2O = hydroxymethylbilane + 4 NH4(+). It functions in the pathway porphyrin-containing compound metabolism; protoporphyrin-IX biosynthesis; coproporphyrinogen-III from 5-aminolevulinate: step 2/4. Functionally, tetrapolymerization of the monopyrrole PBG into the hydroxymethylbilane pre-uroporphyrinogen in several discrete steps. In Citrifermentans bemidjiense (strain ATCC BAA-1014 / DSM 16622 / JCM 12645 / Bem) (Geobacter bemidjiensis), this protein is Porphobilinogen deaminase.